A 689-amino-acid chain; its full sequence is Beta-adrenergic receptor kinase 1 (689 aa).

Positions 1–190 (MADLEAVLAD…ELNIHLTMND (190 aa)) are N-terminal. The RGS domain maps to 54–175 (TFEKIFSQKL…IESDKFTRFC (122 aa)). The Protein kinase domain maps to 191-453 (FSVHRIIGRG…AQEIKESPFF (263 aa)). ATP contacts are provided by residues 197–205 (IGRGGFGEV) and Lys220. Asp317 acts as the Proton acceptor in catalysis. Residues 454 to 521 (RSLDWQMVFL…TISERWQQEV (68 aa)) enclose the AGC-kinase C-terminal domain. A PH domain is found at 558-652 (DCIMHGYMSK…WKKELRDAYR (95 aa)). Ser670 bears the Phosphoserine mark.

The protein belongs to the protein kinase superfamily. AGC Ser/Thr protein kinase family. GPRK subfamily. Interacts with the heterodimer formed by GNB1 and GNG2. Interacts with GIT1. Interacts with, and phosphorylates chemokine-stimulated CCR5. Interacts with ARRB1. Interacts with LPAR1 and LPAR2. Interacts with RALA in response to LPAR1 activation. ADRBK1 and RALA mutually inhibit each other's binding to LPAR1. Interacts with ADRB2. In terms of tissue distribution, expressed at low levels in brain cortex, hippocampus, striatum, hypothalamus, cerebellum and brainstem (at protein level).

It is found in the cytoplasm. It localises to the cell membrane. The protein resides in the postsynapse. Its subcellular location is the presynapse. The catalysed reaction is [beta-adrenergic receptor] + ATP = [beta-adrenergic receptor]-phosphate + ADP + H(+). Its activity is regulated as follows. In contrast to other AGC family kinases, the catalytic activity is solely regulated by the binding of substrates and ligands, not by phosphorylation of the kinase domain. Its function is as follows. Specifically phosphorylates the agonist-occupied form of the beta-adrenergic and closely related receptors, probably inducing a desensitization of them. Key regulator of LPAR1 signaling. Competes with RALA for binding to LPAR1 thus affecting the signaling properties of the receptor. Desensitizes LPAR1 and LPAR2 in a phosphorylation-independent manner. Positively regulates ciliary smoothened (SMO)-dependent Hedgehog (Hh) signaling pathway by facilitating the trafficking of SMO into the cilium and the stimulation of SMO activity. Inhibits relaxation of airway smooth muscle in response to blue light. In Rattus norvegicus (Rat), this protein is Beta-adrenergic receptor kinase 1.